A 429-amino-acid polypeptide reads, in one-letter code: Enolase (429 aa).

Gln-162 is a (2R)-2-phosphoglycerate binding site. The active-site Proton donor is Glu-204. Asp-241, Glu-283, and Asp-310 together coordinate Mg(2+). (2R)-2-phosphoglycerate is bound by residues Lys-335, Arg-364, Ser-365, and Lys-386. The active-site Proton acceptor is the Lys-335.

This sequence belongs to the enolase family. It depends on Mg(2+) as a cofactor.

It is found in the cytoplasm. It localises to the secreted. The protein resides in the cell surface. The catalysed reaction is (2R)-2-phosphoglycerate = phosphoenolpyruvate + H2O. Its pathway is carbohydrate degradation; glycolysis; pyruvate from D-glyceraldehyde 3-phosphate: step 4/5. In terms of biological role, catalyzes the reversible conversion of 2-phosphoglycerate (2-PG) into phosphoenolpyruvate (PEP). It is essential for the degradation of carbohydrates via glycolysis. In Mycobacterium sp. (strain JLS), this protein is Enolase.